We begin with the raw amino-acid sequence, 251 residues long: Ubiquinone/menaquinone biosynthesis C-methyltransferase UbiE (251 aa).

S-adenosyl-L-methionine contacts are provided by residues Thr74, Asp95, 123 to 124 (NA), and Ser140.

It belongs to the class I-like SAM-binding methyltransferase superfamily. MenG/UbiE family.

The enzyme catalyses a 2-demethylmenaquinol + S-adenosyl-L-methionine = a menaquinol + S-adenosyl-L-homocysteine + H(+). It carries out the reaction a 2-methoxy-6-(all-trans-polyprenyl)benzene-1,4-diol + S-adenosyl-L-methionine = a 5-methoxy-2-methyl-3-(all-trans-polyprenyl)benzene-1,4-diol + S-adenosyl-L-homocysteine + H(+). It functions in the pathway quinol/quinone metabolism; menaquinone biosynthesis; menaquinol from 1,4-dihydroxy-2-naphthoate: step 2/2. The protein operates within cofactor biosynthesis; ubiquinone biosynthesis. Its function is as follows. Methyltransferase required for the conversion of demethylmenaquinol (DMKH2) to menaquinol (MKH2) and the conversion of 2-polyprenyl-6-methoxy-1,4-benzoquinol (DDMQH2) to 2-polyprenyl-3-methyl-6-methoxy-1,4-benzoquinol (DMQH2). This is Ubiquinone/menaquinone biosynthesis C-methyltransferase UbiE from Yersinia pestis bv. Antiqua (strain Angola).